The chain runs to 203 residues: Holliday junction branch migration complex subunit RuvA (203 aa).

The domain I stretch occupies residues 1–64; sequence MIGRLRGIII…EDAQLLYGFN (64 aa). Residues 65 to 142 are domain II; the sequence is NKQERTLFKE…KGLHGDLFTP (78 aa). Residues 143-154 form a flexible linker region; the sequence is AADLVLTSPASP. The tract at residues 155–203 is domain III; sequence ATDDAEQEAVAALVALGYKPQEASRMVSKIARPDASSETLIREALHAAL.

Belongs to the RuvA family. Homotetramer. Forms an RuvA(8)-RuvB(12)-Holliday junction (HJ) complex. HJ DNA is sandwiched between 2 RuvA tetramers; dsDNA enters through RuvA and exits via RuvB. An RuvB hexamer assembles on each DNA strand where it exits the tetramer. Each RuvB hexamer is contacted by two RuvA subunits (via domain III) on 2 adjacent RuvB subunits; this complex drives branch migration. In the full resolvosome a probable DNA-RuvA(4)-RuvB(12)-RuvC(2) complex forms which resolves the HJ.

It is found in the cytoplasm. Its function is as follows. The RuvA-RuvB-RuvC complex processes Holliday junction (HJ) DNA during genetic recombination and DNA repair, while the RuvA-RuvB complex plays an important role in the rescue of blocked DNA replication forks via replication fork reversal (RFR). RuvA specifically binds to HJ cruciform DNA, conferring on it an open structure. The RuvB hexamer acts as an ATP-dependent pump, pulling dsDNA into and through the RuvAB complex. HJ branch migration allows RuvC to scan DNA until it finds its consensus sequence, where it cleaves and resolves the cruciform DNA. This is Holliday junction branch migration complex subunit RuvA from Escherichia fergusonii (strain ATCC 35469 / DSM 13698 / CCUG 18766 / IAM 14443 / JCM 21226 / LMG 7866 / NBRC 102419 / NCTC 12128 / CDC 0568-73).